Reading from the N-terminus, the 244-residue chain is tRNA (guanine-N(7)-)-methyltransferase (244 aa).

Residues Glu74, Glu99, Asp126, and Asp149 each coordinate S-adenosyl-L-methionine. Residue Asp149 is part of the active site. Substrate contacts are provided by residues Lys153, Asp185, and 222–225 (TKFE).

The protein belongs to the class I-like SAM-binding methyltransferase superfamily. TrmB family.

It carries out the reaction guanosine(46) in tRNA + S-adenosyl-L-methionine = N(7)-methylguanosine(46) in tRNA + S-adenosyl-L-homocysteine. Its pathway is tRNA modification; N(7)-methylguanine-tRNA biosynthesis. Functionally, catalyzes the formation of N(7)-methylguanine at position 46 (m7G46) in tRNA. The protein is tRNA (guanine-N(7)-)-methyltransferase of Colwellia psychrerythraea (strain 34H / ATCC BAA-681) (Vibrio psychroerythus).